The following is a 283-amino-acid chain: Polyamine aminopropyltransferase (283 aa).

A PABS domain is found at 5–238 (STWIDEYHKG…GIWSWTFASE (234 aa)). Residue Gln32 participates in S-methyl-5'-thioadenosine binding. The spermidine site is built by His63 and Asp87. S-methyl-5'-thioadenosine-binding positions include Glu107 and 139-140 (DG). Residue Asp158 is the Proton acceptor of the active site. Position 158 to 161 (158 to 161 (DCSD)) interacts with spermidine.

The protein belongs to the spermidine/spermine synthase family. As to quaternary structure, homodimer or homotetramer.

It is found in the cytoplasm. It carries out the reaction S-adenosyl 3-(methylsulfanyl)propylamine + putrescine = S-methyl-5'-thioadenosine + spermidine + H(+). It functions in the pathway amine and polyamine biosynthesis; spermidine biosynthesis; spermidine from putrescine: step 1/1. Functionally, catalyzes the irreversible transfer of a propylamine group from the amino donor S-adenosylmethioninamine (decarboxy-AdoMet) to putrescine (1,4-diaminobutane) to yield spermidine. This is Polyamine aminopropyltransferase from Prochlorococcus marinus (strain MIT 9312).